A 230-amino-acid chain; its full sequence is Small ribosomal subunit protein uS3 (230 aa).

One can recognise a KH type-2 domain in the interval 39–107 (VRKFLVEKLQ…PAQINIAEIR (69 aa)).

Belongs to the universal ribosomal protein uS3 family. Part of the 30S ribosomal subunit. Forms a tight complex with proteins S10 and S14.

Binds the lower part of the 30S subunit head. Binds mRNA in the 70S ribosome, positioning it for translation. The protein is Small ribosomal subunit protein uS3 of Shewanella putrefaciens (strain CN-32 / ATCC BAA-453).